The sequence spans 859 residues: Leucine--tRNA ligase (859 aa).

The short motif at 42-52 (PYPSGRLHMGH) is the 'HIGH' region element. The short motif at 618-622 (KMSKS) is the 'KMSKS' region element. Lys621 is a binding site for ATP.

It belongs to the class-I aminoacyl-tRNA synthetase family.

The protein localises to the cytoplasm. It catalyses the reaction tRNA(Leu) + L-leucine + ATP = L-leucyl-tRNA(Leu) + AMP + diphosphate. The protein is Leucine--tRNA ligase of Shewanella woodyi (strain ATCC 51908 / MS32).